The primary structure comprises 259 residues: Imidazole glycerol phosphate synthase subunit HisF (259 aa).

Residues D11 and D130 contribute to the active site.

The protein belongs to the HisA/HisF family. Heterodimer of HisH and HisF.

It is found in the cytoplasm. It carries out the reaction 5-[(5-phospho-1-deoxy-D-ribulos-1-ylimino)methylamino]-1-(5-phospho-beta-D-ribosyl)imidazole-4-carboxamide + L-glutamine = D-erythro-1-(imidazol-4-yl)glycerol 3-phosphate + 5-amino-1-(5-phospho-beta-D-ribosyl)imidazole-4-carboxamide + L-glutamate + H(+). Its pathway is amino-acid biosynthesis; L-histidine biosynthesis; L-histidine from 5-phospho-alpha-D-ribose 1-diphosphate: step 5/9. IGPS catalyzes the conversion of PRFAR and glutamine to IGP, AICAR and glutamate. The HisF subunit catalyzes the cyclization activity that produces IGP and AICAR from PRFAR using the ammonia provided by the HisH subunit. This Polaromonas naphthalenivorans (strain CJ2) protein is Imidazole glycerol phosphate synthase subunit HisF.